The sequence spans 414 residues: Serine hydroxymethyltransferase (414 aa).

(6S)-5,6,7,8-tetrahydrofolate is bound by residues Leu121 and 125–127; that span reads GHL. Lys230 carries the N6-(pyridoxal phosphate)lysine modification.

This sequence belongs to the SHMT family. As to quaternary structure, homodimer. Requires pyridoxal 5'-phosphate as cofactor.

It is found in the cytoplasm. It carries out the reaction (6R)-5,10-methylene-5,6,7,8-tetrahydrofolate + glycine + H2O = (6S)-5,6,7,8-tetrahydrofolate + L-serine. It participates in one-carbon metabolism; tetrahydrofolate interconversion. It functions in the pathway amino-acid biosynthesis; glycine biosynthesis; glycine from L-serine: step 1/1. In terms of biological role, catalyzes the reversible interconversion of serine and glycine with tetrahydrofolate (THF) serving as the one-carbon carrier. This reaction serves as the major source of one-carbon groups required for the biosynthesis of purines, thymidylate, methionine, and other important biomolecules. Also exhibits THF-independent aldolase activity toward beta-hydroxyamino acids, producing glycine and aldehydes, via a retro-aldol mechanism. This chain is Serine hydroxymethyltransferase, found in Acidithiobacillus ferrooxidans (strain ATCC 23270 / DSM 14882 / CIP 104768 / NCIMB 8455) (Ferrobacillus ferrooxidans (strain ATCC 23270)).